The primary structure comprises 450 residues: MQKNQIVDLEITDLSYEAMGVAHLDGMTVFVNNALPGEIVSAKLLKVKKNFAFAKIEKIKKESPDRINVKLRQWVQTGLASLAHIKYDKQLEFKRNQVVNLLHKADLDNVKVGQTMPSPEETGYRNKAQVPVREVNGKLDIGFFRKHSHDLVPLTSFFTTDPEIDRVLIKVRDILRKNHVPAYDEIHNKGEVRYLEVRRSKATGEIMVILVCLHKDFPQLKEVTKEISEIKGVTSVVLNHNPKKTNVILGKKDYLLWGEPQITDKIGDVSFKISPQSFFQINSLQTPRLYDLAIQKADLKPDDVVIDAYSGIGTIGLSVAKHVKAVRGMEVIEPAVEDANANAKLNGITNAEYVVGKAEEVMPRWAKEGLKTDVIFVDPPRKGLTPEFIDAAVETNPKKIVYISCNPATMVRDLQLFKEQGYDFDEIDPVDMFPQTPHVEAVAVLERTEK.

In terms of domain architecture, TRAM spans 1–58 (MQKNQIVDLEITDLSYEAMGVAHLDGMTVFVNNALPGEIVSAKLLKVKKNFAFAKIEK). The S-adenosyl-L-methionine site is built by Q280, Y309, E330, and D378. C405 serves as the catalytic Nucleophile.

The protein belongs to the class I-like SAM-binding methyltransferase superfamily. RNA M5U methyltransferase family.

This is an uncharacterized protein from Lactobacillus johnsonii (strain CNCM I-12250 / La1 / NCC 533).